An 813-amino-acid chain; its full sequence is Cadherin-22 (813 aa).

The first 33 residues, M1–A33, serve as a signal peptide directing secretion. Residues A34–P621 are Extracellular-facing. Cadherin domains are found at residues W61–F165, L166–F274, P275–F391, R392–E495, and L496–F613. N-linked (GlcNAc...) asparagine glycosylation occurs at N159. Residues N463 and N609 are each glycosylated (N-linked (GlcNAc...) asparagine). The chain crosses the membrane as a helical span at residues G622–L642. The Cytoplasmic segment spans residues T643 to S813. Residues G696 to E726 form a disordered region.

As to expression, predominantly expressed in brain. Abundant in olfactory bulb, cerebrum, and cerebellum, less in pons, medulla, and spinal cord. Low expression in heart. No expression in lung, liver, spleen, kidney, testis, stomach, intestine, colon, and placenta.

It is found in the cell membrane. Functionally, cadherins are calcium-dependent cell adhesion proteins. They preferentially interact with themselves in a homophilic manner in connecting cells; cadherins may thus contribute to the sorting of heterogeneous cell types. PB-cadherins may have a role in the morphological organization of pituitary gland and brain tissues. This is Cadherin-22 (Cdh22) from Mus musculus (Mouse).